The primary structure comprises 295 residues: tRNA dimethylallyltransferase (295 aa).

Residue 11–18 (GPTVSGKS) participates in ATP binding. 13-18 (TVSGKS) is a substrate binding site. 2 interaction with substrate tRNA regions span residues 36 to 39 (DSMQ) and 158 to 162 (QRIIR).

The protein belongs to the IPP transferase family. In terms of assembly, monomer. It depends on Mg(2+) as a cofactor.

The enzyme catalyses adenosine(37) in tRNA + dimethylallyl diphosphate = N(6)-dimethylallyladenosine(37) in tRNA + diphosphate. Functionally, catalyzes the transfer of a dimethylallyl group onto the adenine at position 37 in tRNAs that read codons beginning with uridine, leading to the formation of N6-(dimethylallyl)adenosine (i(6)A). This is tRNA dimethylallyltransferase from Bartonella quintana (strain Toulouse) (Rochalimaea quintana).